We begin with the raw amino-acid sequence, 375 residues long: Anhydro-N-acetylmuramic acid kinase 1 (375 aa).

ATP is bound at residue 20–27; that stretch reads GTSFDGVD. The tract at residues 351–375 is disordered; the sequence is APSTTGVAAPVGGGRRSKPGARELS.

It belongs to the anhydro-N-acetylmuramic acid kinase family.

It catalyses the reaction 1,6-anhydro-N-acetyl-beta-muramate + ATP + H2O = N-acetyl-D-muramate 6-phosphate + ADP + H(+). Its pathway is amino-sugar metabolism; 1,6-anhydro-N-acetylmuramate degradation. The protein operates within cell wall biogenesis; peptidoglycan recycling. Catalyzes the specific phosphorylation of 1,6-anhydro-N-acetylmuramic acid (anhMurNAc) with the simultaneous cleavage of the 1,6-anhydro ring, generating MurNAc-6-P. Is required for the utilization of anhMurNAc either imported from the medium or derived from its own cell wall murein, and thus plays a role in cell wall recycling. The protein is Anhydro-N-acetylmuramic acid kinase 1 of Jannaschia sp. (strain CCS1).